The following is a 452-amino-acid chain: Protein CSN12 homolog (452 aa).

The PCI domain occupies 249-446 (VTFKYYEGVL…GFVVLSKSGA (198 aa)).

This sequence belongs to the CSN12 family.

The polypeptide is Protein CSN12 homolog (csn-8) (Neurospora crassa (strain ATCC 24698 / 74-OR23-1A / CBS 708.71 / DSM 1257 / FGSC 987)).